Reading from the N-terminus, the 882-residue chain is MRALLAQNRLVTLCGTGGVGKTRLAIQIASASELRDGLCFVDLAPITESGIVAATAARAVGLPDQPGRSTMDSLRRFIGNRRMLMVLDNCEHLLDACAALVVELLGACPELTILATSREPIGMAGEITWRVPSMSITDEAVELFADRASRVQPGFTIANHNAAAVGEICRRLDGIPLAIEFAAARVRSMSPLEIADGLDDCFRLLAGGVRGAVQRQQTLRASIDWSHALLTETEQILFRRLAPFVGGFDLAAVRAVAAGSDLDPFSVLDQLTLLVDKSLVVADDCQGRTRYRLLETVRRYALEKLGDSGEADVHARHRDYYTALAASLNTPADNDHQRLVARAETEIDNLRAAFAWSRENGHITEALQLASSLQPIWFGRAHLREGLSWFNSILEDQRFHRLAVSTAVRARALADKAMLSTWLATSPVGATDIIAPAQQALAMAREVGDPAALVRALTACGCSSGYNAEAAAPYFAEATDLARAIDDKWTLCQILYWRGVGTCISGDPNALRAAAEECRDLADTIGDRFVSRHCSLWLSLAQMWAGNLTEALELSREITAEAEASNDVPTKVLGLYTQAQVLAYCGASAAHAIAGACIAAATELGGVYQGIGYAAMTYAALAAGDVTAALEASDAARPILRAQPDQVTMHQVLMAQLALAGGDAIAARQFANDAVDATNGWHRMVALTIRARVATARGEPELARDDAHAALACGAELHIYQGMPDAMELLAGLAGEVGSHSEGVRLLGAAAALRQQTRQVRFKIWDAGYQASVTALREAMGDEDFDRAWAEGAALSTDEAIAYAQRGRGERKRPARGWGSLTPTERDVVRLVSEGLSNKDIAKRLFVSPRTVQTHLTHVYAKLGLASRVQLVDEAARRGSPS.

Residues 814-879 (PARGWGSLTP…QLVDEAARRG (66 aa)) form the HTH luxR-type domain. The segment at residues 838-857 (NKDIAKRLFVSPRTVQTHLT) is a DNA-binding region (H-T-H motif).

The protein is Putative HTH-type transcriptional regulator Mb0914c of Mycobacterium bovis (strain ATCC BAA-935 / AF2122/97).